The following is a 585-amino-acid chain: MATGFSFGSGTLGSTTVAPGGTGTGSGFSFGASSTPSVGLNFGTLGSSATPASTSTSASGFGTGLFGSKPGTGFTLGGTSAGTTATTSASTTGFSLGFSKPAASATPFALPVTSTTASGLTLSSALTSAPAASTGFTLNNLGATPATTTAASTGLSLGGALAGLGGSLFQSGNTATSGLGQNALSLSLGTATPTSAASSEGLGGIDFSTSSDKKSDKTGTRPEDSKALKDENLPPVICQDVENLQKFVKEQKQVQEEISRMSSKAMLKVQEDIKALKQLLSLAASGLQRNTLNIDKLKLETAQELKNAEIALRTQKTPPGLQHENTAPADYFRVLVQQFEVQLQQYRQQIEELENHLATQANNSHITPQDLSMAMQKIYQTFVALAAQLQSIHENVKVLKEQYLSYRKMFLGDAGDVFEARRTEAKKWQNAPRVTTGPTPFSTMPNAAAVAMAATLTQQQQPATGPQPSLGVSFGTPFGSGIGTGLQSSGLGSSNLGGFGTSSGFGCGTTGASTFGFGTTDKPSGSLSAGFGSSSTSGFNFSNPGITASAGLTFGVSNPASAGFGTGGQLLQLKRPPAGNKRGKR.

5 consecutive repeat copies span residues F7–G8, F30–G31, F42–G43, F61–G62, and F66–G67. The tract at residues F7 to G565 is 14 X 2 AA repeats of F-G. Residues T194–N232 form a disordered region. The segment covering S211 to N232 has biased composition (basic and acidic residues). Coiled-coil stretches lie at residues E242 to S262 and E300 to T367. T317 bears the Phosphothreonine mark. Tandem repeats lie at residues F474 to G475, F478 to G479, F499 to G500, F505 to G506, F515 to G516, F517 to G518, F531 to G532, F554 to G555, and F564 to G565. Positions G563–R585 are disordered.

Belongs to the NUP58 family. Component of the p62 complex, a complex composed of NUP62, NUP54, and isoform p58 and isoform p45 of NUP58. Isoform p58 interacts with NUTF2. Isoform p58 interacts with SRP1-alpha and Importin p97 proteins when they are together, but not with SRP1-alpha protein alone. Post-translationally, O-glycosylated. Expressed in liver.

It localises to the nucleus. The protein localises to the nuclear pore complex. Its subcellular location is the nucleus membrane. Functionally, component of the nuclear pore complex, a complex required for the trafficking across the nuclear membrane. This Rattus norvegicus (Rat) protein is Nucleoporin p58/p45.